The chain runs to 261 residues: 1-(5-phosphoribosyl)-5-[(5-phosphoribosylamino)methylideneamino] imidazole-4-carboxamide isomerase (261 aa).

The protein belongs to the HisA/HisF family.

It is found in the cytoplasm. The enzyme catalyses 1-(5-phospho-beta-D-ribosyl)-5-[(5-phospho-beta-D-ribosylamino)methylideneamino]imidazole-4-carboxamide = 5-[(5-phospho-1-deoxy-D-ribulos-1-ylimino)methylamino]-1-(5-phospho-beta-D-ribosyl)imidazole-4-carboxamide. The protein operates within amino-acid biosynthesis; L-histidine biosynthesis; L-histidine from 5-phospho-alpha-D-ribose 1-diphosphate: step 4/9. In terms of biological role, catalyzes the isomerization of the aminoaldose moiety of ProFAR to the aminoketose of PRFAR. The sequence is that of 1-(5-phosphoribosyl)-5-[(5-phosphoribosylamino)methylideneamino] imidazole-4-carboxamide isomerase from Saccharomyces cerevisiae (strain ATCC 204508 / S288c) (Baker's yeast).